Here is a 388-residue protein sequence, read N- to C-terminus: Yellow-related salivary protein SP03 (388 aa).

Residues 1–18 form the signal peptide; sequence MKIFLCLIAVVSLQGVLA. N-linked (GlcNAc...) asparagine glycosylation occurs at Asn-29.

This sequence belongs to the major royal jelly protein family. In terms of tissue distribution, female salivary gland (at protein level).

The protein localises to the secreted. Its function is as follows. Probably modulates blood feeding of sand flies on vertebrate species by binding and sequestering different mediators involved in the host response. Binds biogenic amines. Binds noradrenaline with medium affinity. Binds octopamine with low affinity. Poorly binds histamine, adrenaline and serotonin. The polypeptide is Yellow-related salivary protein SP03 (Phlebotomus perniciosus (Phlebotomine sand fly)).